We begin with the raw amino-acid sequence, 31 residues long: U6-ctenitoxin-Co1a (31 aa).

Intrachain disulfides connect cysteine 2–cysteine 18 and cysteine 9–cysteine 23.

As to expression, expressed by the venom gland.

Its subcellular location is the secreted. Functionally, antagonist of L-type calcium channels (Cav1/CACNA1). This is U6-ctenitoxin-Co1a from Ctenus ornatus (Brazilian spider).